The primary structure comprises 638 residues: Octopamine receptor 1 (638 aa).

The Extracellular segment spans residues 1-28 (MSRDIFMKRLRLHLLFDEVAMVTHIVGD). The helical transmembrane segment at 29–53 (VLSSVLLCAVVLLVLVGNTLVVAAV) threads the bilayer. Over 54–64 (ATSRKLRTVTN) the chain is Cytoplasmic. A helical transmembrane segment spans residues 65–87 (VFIVNLACADLLLGVLVLPFSAV). Residues 88–102 (NEIKDVWIFGHVWCQ) are Extracellular-facing. Cys101 and Cys230 are oxidised to a cystine. The helical transmembrane segment at 103–124 (VWLAVDVWLCTASILNLCCISL) threads the bilayer. The Cytoplasmic segment spans residues 125 to 147 (DRYLAITRPIRYPGLMSAKRAKT). Residues 148–167 (LVAGVWLFSFVICCPPLIGW) traverse the membrane as a helical segment. The Extracellular portion of the chain corresponds to 168–239 (NDGGDGIMDY…CELTNSRGYR (72 aa)). Asn178, Asn207, and Asn215 each carry an N-linked (GlcNAc...) asparagine glycan. Residues 240 to 259 (IYAALGSFFIPMLVMVFFYL) form a helical membrane-spanning segment. Over 260–520 (QIYRAAVKTI…FNREKKAAKT (261 aa)) the chain is Cytoplasmic. A helical membrane pass occupies residues 521–545 (LAIIVGAFIMCWMPFFTIYLVGAFC). At 546 to 551 (ENCISP) the chain is on the extracellular side. A helical transmembrane segment spans residues 552–575 (IVFSVAFWLGYCNSAMNPCVYALF). At 576 to 638 (SRDFRFAFRK…TASGGNGGYT (63 aa)) the chain is on the cytoplasmic side. The segment at 618-638 (DDAKSSSDIGPTASGGNGGYT) is disordered.

The protein belongs to the G-protein coupled receptor 1 family. In terms of tissue distribution, expressed in the central nervous system.

The protein localises to the cell membrane. Functionally, G-protein coupled receptor for octopamine (OA), which is a neurotransmitter, neurohormone, and neuromodulator in invertebrates. Activation of this receptor by octopamine induces an increase in both inositol phosphates and cyclic AMP. The coupling to adenylyl cyclase seems to be less efficient than the coupling to phospholipase C. The rank order of potency for agonists is p-synephrine &gt;= clonidine &gt; p-octopamine = xylometazoline = phenylephrine = oxymetazoline &gt; B-HT920 &gt; serotonin = p-tyramine &gt; epinephrine &gt; norepinephrine &gt; methoxamine = dopamine = histamine. For antagonists, the rank order is yohimbine &gt; chlopromazine / spiperone &gt; phentolamine &gt; mianserine &gt; rauwolscine &gt; prazosin &gt; alprenolol / propanolol &gt; pindolol. The sequence is that of Octopamine receptor 1 from Lymnaea stagnalis (Great pond snail).